The following is a 386-amino-acid chain: Bifunctional enzyme IspD/IspF (386 aa).

Residues 1–225 (MYNFVTLSIL…SCLSAPSSDT (225 aa)) are 2-C-methyl-D-erythritol 4-phosphate cytidylyltransferase. The segment at 226-386 (LSGVGFDVHA…NLKYFDWTKI (161 aa)) is 2-C-methyl-D-erythritol 2,4-cyclodiphosphate synthase. 2 residues coordinate a divalent metal cation: Asp-232 and His-234. 4-CDP-2-C-methyl-D-erythritol 2-phosphate is bound by residues 232–234 (DVH) and 258–259 (HS). Position 266 (His-266) interacts with a divalent metal cation. 4-CDP-2-C-methyl-D-erythritol 2-phosphate is bound by residues 280-282 (DIG), 285-289 (FPDND), 356-359 (TTTE), Phe-363, and Arg-366.

In the N-terminal section; belongs to the IspD/TarI cytidylyltransferase family. IspD subfamily. The protein in the C-terminal section; belongs to the IspF family. It depends on a divalent metal cation as a cofactor.

The enzyme catalyses 2-C-methyl-D-erythritol 4-phosphate + CTP + H(+) = 4-CDP-2-C-methyl-D-erythritol + diphosphate. It carries out the reaction 4-CDP-2-C-methyl-D-erythritol 2-phosphate = 2-C-methyl-D-erythritol 2,4-cyclic diphosphate + CMP. Its pathway is isoprenoid biosynthesis; isopentenyl diphosphate biosynthesis via DXP pathway; isopentenyl diphosphate from 1-deoxy-D-xylulose 5-phosphate: step 2/6. It participates in isoprenoid biosynthesis; isopentenyl diphosphate biosynthesis via DXP pathway; isopentenyl diphosphate from 1-deoxy-D-xylulose 5-phosphate: step 4/6. In terms of biological role, bifunctional enzyme that catalyzes the formation of 4-diphosphocytidyl-2-C-methyl-D-erythritol from CTP and 2-C-methyl-D-erythritol 4-phosphate (MEP) (IspD), and catalyzes the conversion of 4-diphosphocytidyl-2-C-methyl-D-erythritol 2-phosphate (CDP-ME2P) to 2-C-methyl-D-erythritol 2,4-cyclodiphosphate (ME-CPP) with a corresponding release of cytidine 5-monophosphate (CMP) (IspF). This Sulfurimonas denitrificans (strain ATCC 33889 / DSM 1251) (Thiomicrospira denitrificans (strain ATCC 33889 / DSM 1251)) protein is Bifunctional enzyme IspD/IspF.